The chain runs to 332 residues: Clavesin-1 (332 aa).

The 162-residue stretch at 96–257 (IKRALMDGFP…EFGGTLPPYD (162 aa)) folds into the CRAL-TRIO domain. The tract at residues 300-332 (KYMKRSHSVVEPGTLRHEEERENENTQPLLALD) is disordered. Residues 313–323 (TLRHEEERENE) show a composition bias toward basic and acidic residues.

It is found in the golgi apparatus. Its subcellular location is the trans-Golgi network membrane. The protein resides in the early endosome membrane. The protein localises to the cytoplasmic vesicle. It localises to the clathrin-coated vesicle. Its function is as follows. Required for normal morphology of late endosomes and/or lysosomes in neurons. Binds phosphatidylinositol 3,5-bisphosphate (PtdIns(3,5)P2). The polypeptide is Clavesin-1 (clvs1) (Xenopus laevis (African clawed frog)).